The chain runs to 500 residues: Glycerol-3-phosphate acyltransferase 7 (500 aa).

The next 2 membrane-spanning stretches (helical) occupy residues 38-58 (GLIR…LDVL) and 235-255 (ALII…RIFV). The short motif at 298–303 (HRTLMD) is the HXXXXD motif element.

Belongs to the GPAT/DAPAT family. Weakly or not expressed in roots, leaves, seedlings, developing siliques and flower buds.

The protein resides in the membrane. It carries out the reaction sn-glycerol 3-phosphate + an acyl-CoA = a 1-acyl-sn-glycero-3-phosphate + CoA. Its pathway is phospholipid metabolism; CDP-diacylglycerol biosynthesis; CDP-diacylglycerol from sn-glycerol 3-phosphate: step 1/3. Functionally, esterifies acyl-group from acyl-ACP to the sn-1 position of glycerol-3-phosphate, an essential step in glycerolipid biosynthesis. This chain is Glycerol-3-phosphate acyltransferase 7 (GPAT7), found in Arabidopsis thaliana (Mouse-ear cress).